The chain runs to 24 residues: Brevinin-1E (24 aa).

Cys18 and Cys24 are disulfide-bonded.

Expressed by the skin glands.

It localises to the secreted. Functionally, antimicrobial peptide. Stimulates insulin release by BRIN-BD11 cells in vitro. The chain is Brevinin-1E from Pelophylax saharicus (Sahara frog).